The chain runs to 134 residues: Small ribosomal subunit protein bS6 (134 aa).

The segment at 103-134 (AAPVKSAEEGTEEVAAEAATEAPAETTTTVEG) is disordered. The span at 118–134 (AEAATEAPAETTTTVEG) shows a compositional bias: low complexity.

Belongs to the bacterial ribosomal protein bS6 family.

In terms of biological role, binds together with bS18 to 16S ribosomal RNA. The protein is Small ribosomal subunit protein bS6 of Citrifermentans bemidjiense (strain ATCC BAA-1014 / DSM 16622 / JCM 12645 / Bem) (Geobacter bemidjiensis).